A 776-amino-acid polypeptide reads, in one-letter code: Protein SEY1 (776 aa).

Residues 1-681 are Cytoplasmic-facing; sequence MADRPAIQLI…KRSIITTRTH (681 aa). The GB1/RHD3-type G domain occupies 34–263; it reads GLDYHVISVF…TENYYFKPQY (230 aa). 44 to 51 contributes to the GTP binding site; sequence GSQSSGKS. Residues 682-702 form a helical membrane-spanning segment; the sequence is IPPWIYVLLAVLGWNEFVAVI. The Lumenal segment spans residues 703–705; that stretch reads RNP. A helical transmembrane segment spans residues 706–726; the sequence is LFVTLTLILGATFFVIHKFGL. The Cytoplasmic portion of the chain corresponds to 727–776; that stretch reads WGPVVNVVQSAVGETRTAIKDKLRQFVVEDHEVKESFEMKDFSKNEQKEK.

Belongs to the TRAFAC class dynamin-like GTPase superfamily. GB1/RHD3 GTPase family. RHD3 subfamily. Interacts with RTN1 and YOP1; GTP binding is not required for these interactions.

The protein resides in the endoplasmic reticulum membrane. Its function is as follows. Cooperates with the reticulon proteins RTN1 and RTN2 and the tubule-shaping DP1 family protein YOP1 to generate and maintain the structure of the tubular endoplasmic reticulum network. Has GTPase activity, which is required for its function in ER organization. The polypeptide is Protein SEY1 (Saccharomyces cerevisiae (strain ATCC 204508 / S288c) (Baker's yeast)).